Reading from the N-terminus, the 349-residue chain is Probable dual-specificity RNA methyltransferase RlmN (349 aa).

The active-site Proton acceptor is the E93. One can recognise a Radical SAM core domain in the interval 99–329; it reads YKHGNTICVS…TTIRREMGSD (231 aa). C106 and C334 are disulfide-bonded. The [4Fe-4S] cluster site is built by C113, C117, and C120. Residues 160–161, S192, 215–217, and N291 contribute to the S-adenosyl-L-methionine site; these read GE and SLH. The active-site S-methylcysteine intermediate is the C334.

The protein belongs to the radical SAM superfamily. RlmN family. The cofactor is [4Fe-4S] cluster.

The protein resides in the cytoplasm. It catalyses the reaction adenosine(2503) in 23S rRNA + 2 reduced [2Fe-2S]-[ferredoxin] + 2 S-adenosyl-L-methionine = 2-methyladenosine(2503) in 23S rRNA + 5'-deoxyadenosine + L-methionine + 2 oxidized [2Fe-2S]-[ferredoxin] + S-adenosyl-L-homocysteine. The catalysed reaction is adenosine(37) in tRNA + 2 reduced [2Fe-2S]-[ferredoxin] + 2 S-adenosyl-L-methionine = 2-methyladenosine(37) in tRNA + 5'-deoxyadenosine + L-methionine + 2 oxidized [2Fe-2S]-[ferredoxin] + S-adenosyl-L-homocysteine. Its function is as follows. Specifically methylates position 2 of adenine 2503 in 23S rRNA and position 2 of adenine 37 in tRNAs. The chain is Probable dual-specificity RNA methyltransferase RlmN from Clostridium tetani (strain Massachusetts / E88).